Here is a 552-residue protein sequence, read N- to C-terminus: Berberine bridge enzyme-like 6 (552 aa).

The signal sequence occupies residues Met1 to Pro16. A disulfide bridge connects residues Cys56 and Cys119. N-linked (GlcNAc...) asparagine glycans are attached at residues Asn76, Asn161, Asn280, Asn364, Asn419, and Asn463. The FAD-binding PCMH-type domain occupies Phe93–Val270. The 6-(S-cysteinyl)-8alpha-(pros-histidyl)-FAD (His-Cys) cross-link spans His134–Cys196.

Belongs to the oxygen-dependent FAD-linked oxidoreductase family. Requires FAD as cofactor. The FAD cofactor is bound via a bicovalent 6-S-cysteinyl, 8alpha-N1-histidyl FAD linkage.

The protein resides in the secreted. It localises to the cell wall. Functionally, probable flavin-dependent oxidoreductase. The polypeptide is Berberine bridge enzyme-like 6 (Arabidopsis thaliana (Mouse-ear cress)).